Reading from the N-terminus, the 154-residue chain is Iron-sulfur cluster assembly enzyme IscU (154 aa).

Belongs to the NifU family. Component of the mitochondrial core iron-sulfur cluster (ISC) assembly complex at least composed of the cystein desulfurase Nfs1, the scaffold protein IscU, the accessory protein bcn92/Isd11/Lyrm4, and probably fh/frataxin. Interacts with Nfs1. Requires Fe(2+) as cofactor. [2Fe-2S] cluster serves as cofactor.

Its pathway is cofactor biosynthesis; iron-sulfur cluster biosynthesis. Scaffold protein for the de novo synthesis of iron-sulfur (Fe-S) clusters within mitochondria, which is required for maturation of both mitochondrial and cytoplasmic [2Fe-2S] and [4Fe-4S] proteins. Component of the mitochondrial core iron-sulfur cluster (ISC) assembly complex; regulates its activity. This is Iron-sulfur cluster assembly enzyme IscU from Drosophila melanogaster (Fruit fly).